A 473-amino-acid polypeptide reads, in one-letter code: ATP synthase subunit beta (473 aa).

Residue 153-160 (GGAGVGKT) participates in ATP binding.

It belongs to the ATPase alpha/beta chains family. As to quaternary structure, F-type ATPases have 2 components, CF(1) - the catalytic core - and CF(0) - the membrane proton channel. CF(1) has five subunits: alpha(3), beta(3), gamma(1), delta(1), epsilon(1). CF(0) has three main subunits: a(1), b(2) and c(9-12). The alpha and beta chains form an alternating ring which encloses part of the gamma chain. CF(1) is attached to CF(0) by a central stalk formed by the gamma and epsilon chains, while a peripheral stalk is formed by the delta and b chains.

Its subcellular location is the cell inner membrane. It catalyses the reaction ATP + H2O + 4 H(+)(in) = ADP + phosphate + 5 H(+)(out). Produces ATP from ADP in the presence of a proton gradient across the membrane. The catalytic sites are hosted primarily by the beta subunits. This Rickettsia akari (strain Hartford) protein is ATP synthase subunit beta.